Here is a 446-residue protein sequence, read N- to C-terminus: Xylose isomerase 2 (446 aa).

Active-site residues include histidine 109 and aspartate 112. Mg(2+) is bound by residues glutamate 240, glutamate 276, histidine 279, aspartate 304, aspartate 315, aspartate 317, and aspartate 347.

It belongs to the xylose isomerase family. In terms of assembly, homotetramer. It depends on Mg(2+) as a cofactor.

It is found in the cytoplasm. The catalysed reaction is alpha-D-xylose = alpha-D-xylulofuranose. The protein is Xylose isomerase 2 of Xanthomonas campestris pv. campestris (strain 8004).